Consider the following 345-residue polypeptide: GTPase Obg (345 aa).

In terms of domain architecture, Obg spans 1-159 (MKFIDEAIIK…RTLRLELKLL (159 aa)). The disordered stretch occupies residues 127-148 (NARFKSSTNRAPRKTTQGKPGE). The span at 130-144 (FKSSTNRAPRKTTQG) shows a compositional bias: polar residues. One can recognise an OBG-type G domain in the interval 160–334 (ADVGLLGLPN…LIHAVMQYLE (175 aa)). Residues 166 to 173 (GLPNAGKS), 191 to 195 (FTTLH), 213 to 216 (DIPG), 284 to 287 (NKTD), and 315 to 317 (SAL) each bind GTP. 2 residues coordinate Mg(2+): Ser173 and Thr193.

It belongs to the TRAFAC class OBG-HflX-like GTPase superfamily. OBG GTPase family. In terms of assembly, monomer. Requires Mg(2+) as cofactor.

It is found in the cytoplasm. In terms of biological role, an essential GTPase which binds GTP, GDP and possibly (p)ppGpp with moderate affinity, with high nucleotide exchange rates and a fairly low GTP hydrolysis rate. Plays a role in control of the cell cycle, stress response, ribosome biogenesis and in those bacteria that undergo differentiation, in morphogenesis control. The sequence is that of GTPase Obg from Nitrosococcus oceani (strain ATCC 19707 / BCRC 17464 / JCM 30415 / NCIMB 11848 / C-107).